Consider the following 560-residue polypeptide: Protein AATF (560 aa).

N-acetylalanine is present on A2. Phosphoserine is present on residues S61 and S63. A disordered region spans residues 76 to 208; it reads TSRKAWNEDH…GDRNSEDDGV (133 aa). The segment covering 94–129 has biased composition (acidic residues); it reads SDEEISDEEGSGDEDSEGLGLEEYDEDDLGAAEEQE. A phosphoserine mark is found at S150 and S155. Over residues 156–165 the composition is skewed to basic and acidic residues; sequence DFEKFTKGMD. The span at 168–195 shows a compositional bias: acidic residues; the sequence is GSSEEEEDEESGMEEGDDAEDSQGESEE. S203, S273, S316, S320, and S321 each carry phosphoserine. The interval 273-315 is POLR2J binding; the sequence is SALKNSHKALKALLRSLVGLQEELLFQYPDTRYLVDGTKPNAG. The tract at residues 309–333 is disordered; that stretch reads GTKPNAGSEEISSEDDELVEEKKQQ. The interval 316 to 372 is RB1 binding; the sequence is SEEISSEDDELVEEKKQQRRRVPAKRKLEMEDYPSFMAKRFADFTVYRNRTLQKWHD. The tract at residues 373–472 is RB1 and SP1 binding; sequence KTKLASGKLG…FYHQLLRELI (100 aa).

Belongs to the AATF family. As to quaternary structure, part of the small subunit (SSU) processome, composed of more than 70 proteins and the RNA chaperone small nucleolar RNA (snoRNA) U3. Interacts with POLR2J, RB1/RB, RBL1/P107 and RBL2/P130. Interacts with PAWR and SP1. May also bind MAPT. Hyperphosphorylated during the G1/S phase transition. As to expression, ubiquitously expressed. Expressed at high levels in brain, heart, kidney, placenta and thymus.

The protein localises to the nucleus. It localises to the nucleolus. In terms of biological role, part of the small subunit (SSU) processome, first precursor of the small eukaryotic ribosomal subunit. During the assembly of the SSU processome in the nucleolus, many ribosome biogenesis factors, an RNA chaperone and ribosomal proteins associate with the nascent pre-rRNA and work in concert to generate RNA folding, modifications, rearrangements and cleavage as well as targeted degradation of pre-ribosomal RNA by the RNA exosome. May function as a general inhibitor of the histone deacetylase HDAC1. Binding to the pocket region of RB1 may displace HDAC1 from RB1/E2F complexes, leading to activation of E2F target genes and cell cycle progression. Conversely, displacement of HDAC1 from SP1 bound to the CDKN1A promoter leads to increased expression of this CDK inhibitor and blocks cell cycle progression. Also antagonizes PAWR mediated induction of aberrant amyloid peptide production in Alzheimer disease (presenile and senile dementia), although the molecular basis for this phenomenon has not been described to date. This is Protein AATF from Homo sapiens (Human).